A 232-amino-acid polypeptide reads, in one-letter code: Ashwin (232 aa).

Residues Ser112, Ser182, Ser184, Ser189, and Ser193 each carry the phosphoserine modification. Residues 163-232 form a disordered region; sequence KMEHNNNDTQ…KRKIQHVTWP (70 aa). Residues Thr197 and Thr198 each carry the phosphothreonine modification. Over residues 206–224 the composition is skewed to basic and acidic residues; sequence APKEEAEATNHLKPPEVKR.

The protein belongs to the ashwin family. Component of the tRNA-splicing ligase complex.

It is found in the nucleus. The sequence is that of Ashwin from Mus musculus (Mouse).